The following is a 139-amino-acid chain: Large ribosomal subunit protein uL16 (139 aa).

Over residues Met1–Met17 the composition is skewed to basic residues. Positions Met1–Gly24 are disordered.

It belongs to the universal ribosomal protein uL16 family. Part of the 50S ribosomal subunit.

Its function is as follows. Binds 23S rRNA and is also seen to make contacts with the A and possibly P site tRNAs. The protein is Large ribosomal subunit protein uL16 of Chlorobium limicola (strain DSM 245 / NBRC 103803 / 6330).